The sequence spans 143 residues: Ribonuclease HI (143 aa).

The RNase H type-1 domain occupies 1 to 136 (MQEIEIFCDG…CDSLAKLEAQ (136 aa)). Residues D9, E47, D69, and D128 each coordinate Mg(2+).

This sequence belongs to the RNase H family. Monomer. It depends on Mg(2+) as a cofactor.

The protein localises to the cytoplasm. It catalyses the reaction Endonucleolytic cleavage to 5'-phosphomonoester.. In terms of biological role, endonuclease that specifically degrades the RNA of RNA-DNA hybrids. The protein is Ribonuclease HI (rnhA) of Helicobacter pylori (strain ATCC 700392 / 26695) (Campylobacter pylori).